Reading from the N-terminus, the 184-residue chain is Large ribosomal subunit protein uL15 (184 aa).

Residues 1–62 (MDLSSLRPAK…QMPMYRRLPK (62 aa)) are disordered. Over residues 21-35 (RGPGSGNGTTAGKGN) the composition is skewed to gly residues.

This sequence belongs to the universal ribosomal protein uL15 family. Part of the 50S ribosomal subunit.

Functionally, binds to the 23S rRNA. This is Large ribosomal subunit protein uL15 from Chlorobaculum parvum (strain DSM 263 / NCIMB 8327) (Chlorobium vibrioforme subsp. thiosulfatophilum).